We begin with the raw amino-acid sequence, 545 residues long: Glucose-6-phosphate isomerase (545 aa).

The active-site Proton donor is Glu351. Catalysis depends on residues His382 and Lys510.

The protein belongs to the GPI family.

It localises to the cytoplasm. The enzyme catalyses alpha-D-glucose 6-phosphate = beta-D-fructose 6-phosphate. The protein operates within carbohydrate biosynthesis; gluconeogenesis. It participates in carbohydrate degradation; glycolysis; D-glyceraldehyde 3-phosphate and glycerone phosphate from D-glucose: step 2/4. Catalyzes the reversible isomerization of glucose-6-phosphate to fructose-6-phosphate. The sequence is that of Glucose-6-phosphate isomerase from Helicobacter pylori (strain HPAG1).